Reading from the N-terminus, the 132-residue chain is Phosphoribosyl-ATP pyrophosphatase (132 aa).

It belongs to the PRA-PH family.

It is found in the cytoplasm. It carries out the reaction 1-(5-phospho-beta-D-ribosyl)-ATP + H2O = 1-(5-phospho-beta-D-ribosyl)-5'-AMP + diphosphate + H(+). Its pathway is amino-acid biosynthesis; L-histidine biosynthesis; L-histidine from 5-phospho-alpha-D-ribose 1-diphosphate: step 2/9. This Acidovorax sp. (strain JS42) protein is Phosphoribosyl-ATP pyrophosphatase.